The sequence spans 249 residues: Formylaminopyrimidine import ATP-binding protein ThiZ (249 aa).

Residues 6-228 (LTFEEVSFAY…RRKMETTEKM (223 aa)) enclose the ABC transporter domain. Position 39–46 (39–46 (AKSGSGKS)) interacts with ATP.

The protein belongs to the ABC transporter superfamily. As to quaternary structure, the complex is likely composed of an ATP-binding protein (ThiZ), a transmembrane protein (ThiX) and a solute-binding protein (ThiY).

The protein resides in the cell membrane. It functions in the pathway cofactor biosynthesis; thiamine diphosphate biosynthesis. In terms of biological role, participates in a thiamine pyrimidine salvage pathway as part of the ABC transporter complex ThiXYZ involved in the import of thiamine degradation products such as the formylaminopyrimidine N-formyl-4-amino-5-aminomethyl-2-methylpyrimidine (FAMP). Is likely responsible for energy coupling to the transport system. In Halalkalibacterium halodurans (strain ATCC BAA-125 / DSM 18197 / FERM 7344 / JCM 9153 / C-125) (Bacillus halodurans), this protein is Formylaminopyrimidine import ATP-binding protein ThiZ.